A 470-amino-acid chain; its full sequence is FRIGIDA-like protein 1 (470 aa).

Residues 336–369 adopt a coiled-coil conformation; sequence KDQNLESEFTQEKVEERVEELEKNKALRKRNTTN. The tract at residues 355 to 400 is disordered; it reads ELEKNKALRKRNTTNPPKQEPQQKGKKRTRDCKNGSQVPVPSQQLL. A compositionally biased stretch (polar residues) spans 388-400; that stretch reads NGSQVPVPSQQLL.

The protein belongs to the Frigida family. Component of the transcription activator complex FRI-C composed of FRI, FRL1, SUF4, FLX and FES1. Interacts with FRI and SUF4. In terms of tissue distribution, expressed during seed development and in dry seed. Preferentially expressed in the chalazal endosperm during early stages of seed development.

Functionally, required for FRI-mediated up-regulation of FLC transcripts, but not redundant with FRI and only partially redundant with FRL2. Required for the stabilization of the FRI-C complex. The protein is FRIGIDA-like protein 1 (FRL1) of Arabidopsis thaliana (Mouse-ear cress).